We begin with the raw amino-acid sequence, 456 residues long: tRNA(Ile)-lysidine synthase (456 aa).

28–33 (SGGSDS) contacts ATP.

This sequence belongs to the tRNA(Ile)-lysidine synthase family.

The protein resides in the cytoplasm. The enzyme catalyses cytidine(34) in tRNA(Ile2) + L-lysine + ATP = lysidine(34) in tRNA(Ile2) + AMP + diphosphate + H(+). Its function is as follows. Ligates lysine onto the cytidine present at position 34 of the AUA codon-specific tRNA(Ile) that contains the anticodon CAU, in an ATP-dependent manner. Cytidine is converted to lysidine, thus changing the amino acid specificity of the tRNA from methionine to isoleucine. The polypeptide is tRNA(Ile)-lysidine synthase (Brucella anthropi (strain ATCC 49188 / DSM 6882 / CCUG 24695 / JCM 21032 / LMG 3331 / NBRC 15819 / NCTC 12168 / Alc 37) (Ochrobactrum anthropi)).